The chain runs to 86 residues: SEED MATURATION PROTEIN 1 (86 aa).

Positions 52–86 (RIEKGKEQSAASGDQTQIQRDIKDIKGTRTDDSPR) are disordered. The segment covering 60-70 (SAASGDQTQIQ) has biased composition (polar residues). The segment covering 71 to 86 (RDIKDIKGTRTDDSPR) has biased composition (basic and acidic residues).

This sequence belongs to the LEA type 3 family.

Protein chaperone involved in seed maturation and dormancy maintenance after high temperature fluctuation (e.g. secondary dormancy after 3 days at 40 degrees Celsius), probably by protecting heat labile proteins required for secondary dormancy (e.g. G6PDH, HOP3, SR45, ECP63, SCL33, RPL32B, ChlADR1, MSBP1, MBF1B, At3g01690, At1g15280, At1g15290, At2g31410, At1g11630, At1g65090, EMB2279, EMB1674 and RPL35C). The polypeptide is SEED MATURATION PROTEIN 1 (Arabidopsis thaliana (Mouse-ear cress)).